The chain runs to 153 residues: Prostaglandin E synthase (153 aa).

Topologically, residues 1-13 are lumenal; that stretch reads MPPPSLAMVSGQA. Residues 14–42 traverse the membrane as a helical segment; the sequence is LPAFLLCSTLLVIKMYAVAVITGQVRLRK. Position 39 (Arg-39) interacts with glutathione. At 43–61 the chain is on the cytoplasmic side; it reads KAFANPEDALRHGGLQFHR. The helical transmembrane segment at 62–91 threads the bilayer; that stretch reads DDQDVERCLRAHRNDMETIYPFLFLGLVYS. Position 74 to 78 (74 to 78) interacts with glutathione; that stretch reads RNDME. Topologically, residues 92–96 are lumenal; that stretch reads FLGPD. The helical transmembrane segment at 97-120 threads the bilayer; that stretch reads PFVAQMHFLVFFLGRMVHTVAYLG. Residues His-114 and Tyr-118 each coordinate glutathione. The Cytoplasmic segment spans residues 121–124; it reads KLRA. The chain crosses the membrane as a helical span at residues 125-153; the sequence is PTRSLAYTVAQLPCASMALQIVWEAARHL. 127–131 lines the glutathione pocket; it reads RSLAY.

It belongs to the MAPEG family. Homotrimer. It depends on glutathione as a cofactor.

The protein resides in the membrane. Its subcellular location is the cytoplasm. The protein localises to the perinuclear region. The enzyme catalyses prostaglandin H2 = prostaglandin E2. It carries out the reaction 2-glyceryl-prostaglandin H2 = 2-glyceryl-prostaglandin E2. The catalysed reaction is prostaglandin G2 = (15S)-15-hydroperoxy-prostaglandin E2. It catalyses the reaction 1-chloro-2,4-dinitrobenzene + glutathione = 2,4-dinitrophenyl-S-glutathione + chloride + H(+). The enzyme catalyses (5S)-hydroperoxy-(6E,8Z,11Z,14Z)-eicosatetraenoate + 2 glutathione = (5S)-hydroxy-(6E,8Z,11Z,14Z)-eicosatetraenoate + glutathione disulfide + H2O. It participates in lipid metabolism; prostaglandin biosynthesis. Its function is as follows. Terminal enzyme of the cyclooxygenase (COX)-2-mediated prostaglandin E2 (PGE2) biosynthetic pathway. Catalyzes the glutathione-dependent oxidoreduction of prostaglandin endoperoxide H2 (PGH2) to prostaglandin E2 (PGE2) in response to inflammatory stimuli. Plays a key role in inflammation response, fever and pain. Also catalyzes the oxidoreduction of endocannabinoids into prostaglandin glycerol esters and PGG2 into 15-hydroperoxy-PGE2. In addition, displays low glutathione transferase and glutathione-dependent peroxidase activities, toward 1-chloro-2,4-dinitrobenzene and 5-hydroperoxyicosatetraenoic acid (5-HPETE), respectively. This Equus caballus (Horse) protein is Prostaglandin E synthase (PTGES).